A 438-amino-acid chain; its full sequence is Serine hydroxymethyltransferase (438 aa).

(6S)-5,6,7,8-tetrahydrofolate contacts are provided by residues Leu-133 and 137–139 (GHL). Residue Lys-242 is modified to N6-(pyridoxal phosphate)lysine.

This sequence belongs to the SHMT family. Homodimer. The cofactor is pyridoxal 5'-phosphate.

Its subcellular location is the cytoplasm. The catalysed reaction is (6R)-5,10-methylene-5,6,7,8-tetrahydrofolate + glycine + H2O = (6S)-5,6,7,8-tetrahydrofolate + L-serine. Its pathway is one-carbon metabolism; tetrahydrofolate interconversion. It participates in amino-acid biosynthesis; glycine biosynthesis; glycine from L-serine: step 1/1. In terms of biological role, catalyzes the reversible interconversion of serine and glycine with tetrahydrofolate (THF) serving as the one-carbon carrier. This reaction serves as the major source of one-carbon groups required for the biosynthesis of purines, thymidylate, methionine, and other important biomolecules. Also exhibits THF-independent aldolase activity toward beta-hydroxyamino acids, producing glycine and aldehydes, via a retro-aldol mechanism. The chain is Serine hydroxymethyltransferase from Brucella ovis (strain ATCC 25840 / 63/290 / NCTC 10512).